Here is a 257-residue protein sequence, read N- to C-terminus: Glutamate racemase (257 aa).

Substrate contacts are provided by residues Asp12 to Ser13 and Tyr44 to Gly45. The Proton donor/acceptor role is filled by Cys75. Asn76–Thr77 is a substrate binding site. Cys185 functions as the Proton donor/acceptor in the catalytic mechanism. Substrate is bound at residue Thr186–His187.

This sequence belongs to the aspartate/glutamate racemases family.

The enzyme catalyses L-glutamate = D-glutamate. It participates in cell wall biogenesis; peptidoglycan biosynthesis. Functionally, provides the (R)-glutamate required for cell wall biosynthesis. In Clostridium botulinum (strain 657 / Type Ba4), this protein is Glutamate racemase.